Reading from the N-terminus, the 105-residue chain is Thioredoxin (105 aa).

In terms of domain architecture, Thioredoxin spans 1–105 (MVNNVTDISF…SLLDWINKSI (105 aa)). The cysteines at positions 30 and 33 are disulfide-linked.

Belongs to the thioredoxin family.

Functionally, component of the thioredoxin-thioredoxin reductase system. Participates in various redox reactions through the reversible oxidation of its active center dithiol to a disulfide and catalyzes dithiol-disulfide exchange reactions. This chain is Thioredoxin (trxA), found in Rickettsia typhi (strain ATCC VR-144 / Wilmington).